Reading from the N-terminus, the 446-residue chain is Questin oxidase (446 aa).

The protein belongs to the questin oxidase family.

The enzyme catalyses questin + NADPH + O2 = demethylsulochrin + NADP(+). The protein operates within secondary metabolite biosynthesis. Functionally, questin oxidase; part of the gene cluster that mediates the biosynthesis of geodin, an intermediate in the biosynthesis of other natural products. The pathway begins with the synthesis of atrochrysone thioester by the polyketide synthase (PKS) gedC. The atrochrysone carboxyl ACP thioesterase gedB then breaks the thioester bond and releases the atrochrysone carboxylic acid from gedC. The atrochrysone carboxylic acid is then converted to atrochrysone which is further transformed into emodinanthrone. The next step is performed by the emodinanthrone oxygenase gedH that catalyzes the oxidation of emodinanthrone to emodin. Emodin O-methyltransferase encoded probably by gedA then catalyzes methylation of the 8-hydroxy group of emodin to form questin. Ring cleavage of questin by questin oxidase gedK leads to desmethylsulochrin via several intermediates including questin epoxide. Another methylation step probably catalyzed by methyltransferase gedG leads to the formation of sulochrin which is further converted to dihydrogeodin by the sulochrin halogenase gedL. Finally, the dihydrogeodin oxidase gedJ catalyzes the stereospecific phenol oxidative coupling reaction converting dihydrogeodin to geodin. This Aspergillus terreus (strain NIH 2624 / FGSC A1156) protein is Questin oxidase.